The following is a 136-amino-acid chain: Large ribosomal subunit protein uL13 (136 aa).

Belongs to the universal ribosomal protein uL13 family. As to quaternary structure, part of the 50S ribosomal subunit.

Functionally, this protein is one of the early assembly proteins of the 50S ribosomal subunit, although it is not seen to bind rRNA by itself. It is important during the early stages of 50S assembly. The polypeptide is Large ribosomal subunit protein uL13 (Thermoplasma acidophilum (strain ATCC 25905 / DSM 1728 / JCM 9062 / NBRC 15155 / AMRC-C165)).